The sequence spans 83 residues: Protein ORF5 (83 aa).

This sequence belongs to the microviridae C protein family.

In terms of biological role, plays a central role in the packaging of viral DNA into phage procapsid, which occurs in the late stage of infection. Can interact with the replicative complex after the completion of one round of DNA synthesis. When protein ORF5 is bound to the replicative form, the complex becomes accessible to procapsid and serves as a DNA packaging apparatus. This Spiroplasma melliferum (SpV4) protein is Protein ORF5.